Consider the following 232-residue polypeptide: Large ribosomal subunit protein uL1 (232 aa).

This sequence belongs to the universal ribosomal protein uL1 family. As to quaternary structure, part of the 50S ribosomal subunit.

In terms of biological role, binds directly to 23S rRNA. The L1 stalk is quite mobile in the ribosome, and is involved in E site tRNA release. Protein L1 is also a translational repressor protein, it controls the translation of the L11 operon by binding to its mRNA. The polypeptide is Large ribosomal subunit protein uL1 (Xanthomonas campestris pv. campestris (strain B100)).